The sequence spans 193 residues: Glycerol-3-phosphate acyltransferase (193 aa).

A run of 5 helical transmembrane segments spans residues 2 to 22 (AFII…AVIV), 51 to 71 (QAAF…VLIA), 78 to 98 (GVSL…PVYF), 112 to 132 (VLLG…VIVV), and 154 to 174 (IIAG…LIIW).

It belongs to the PlsY family. Probably interacts with PlsX.

The protein resides in the cell inner membrane. The catalysed reaction is an acyl phosphate + sn-glycerol 3-phosphate = a 1-acyl-sn-glycero-3-phosphate + phosphate. Its pathway is lipid metabolism; phospholipid metabolism. Catalyzes the transfer of an acyl group from acyl-phosphate (acyl-PO(4)) to glycerol-3-phosphate (G3P) to form lysophosphatidic acid (LPA). This enzyme utilizes acyl-phosphate as fatty acyl donor, but not acyl-CoA or acyl-ACP. In Coxiella burnetii (strain CbuK_Q154) (Coxiella burnetii (strain Q154)), this protein is Glycerol-3-phosphate acyltransferase.